The sequence spans 306 residues: Arginase (306 aa).

Residues His-96, Asp-123, His-125, and Asp-127 each coordinate Mn(2+). Residues 125-129, 136-138, and Asp-178 contribute to the substrate site; these read HTDFH and SGN. Residues Asp-226 and Asp-228 each coordinate Mn(2+). Thr-240 and Glu-271 together coordinate substrate.

The protein belongs to the arginase family. Requires Mn(2+) as cofactor.

It catalyses the reaction L-arginine + H2O = urea + L-ornithine. The protein operates within nitrogen metabolism; urea cycle; L-ornithine and urea from L-arginine: step 1/1. The sequence is that of Arginase (arcB) from Brucella abortus biovar 1 (strain 9-941).